Reading from the N-terminus, the 306-residue chain is MSSHPPAPRKHVTIHELRRMKESGERIAMVTAYDATAARLVAVAGVDAVLVGDSLGMAVQGHESTLPVTLDQMVYHSAMVRRGLARGDGRAHLVTDMSFGSYQASADEAVKAAMRLVAEGGAEAVKLEGGAEFGEVIRRIVRAGVPVMGHIGLTPQSVHKMGGYVVQGKDSEKAQQILRDARALEAAGCYALVLECIPSELARIVTSQLRIPTIGIGAGPHCDGQVLVLNDLLGLDASFTPRFVKRFGEVGAAVQDAVGAYVGEVKARAFPDDAHSFHSSSVRLVPVERHAEAAEEEPPDAIGAPI.

Residues Asp53 and Asp96 each contribute to the Mg(2+) site. Residues 53-54 (DS), Asp96, and Lys126 contribute to the 3-methyl-2-oxobutanoate site. Mg(2+) is bound at residue Glu128. Glu195 functions as the Proton acceptor in the catalytic mechanism.

It belongs to the PanB family. Homodecamer; pentamer of dimers. Requires Mg(2+) as cofactor.

Its subcellular location is the cytoplasm. It carries out the reaction 3-methyl-2-oxobutanoate + (6R)-5,10-methylene-5,6,7,8-tetrahydrofolate + H2O = 2-dehydropantoate + (6S)-5,6,7,8-tetrahydrofolate. It participates in cofactor biosynthesis; (R)-pantothenate biosynthesis; (R)-pantoate from 3-methyl-2-oxobutanoate: step 1/2. Its function is as follows. Catalyzes the reversible reaction in which hydroxymethyl group from 5,10-methylenetetrahydrofolate is transferred onto alpha-ketoisovalerate to form ketopantoate. This Anaeromyxobacter dehalogenans (strain 2CP-1 / ATCC BAA-258) protein is 3-methyl-2-oxobutanoate hydroxymethyltransferase.